A 196-amino-acid polypeptide reads, in one-letter code: ATP-dependent Clp protease proteolytic subunit (196 aa).

The active-site Nucleophile is the S101. The active site involves H126.

The protein belongs to the peptidase S14 family. Component of the chloroplastic Clp protease core complex.

The protein localises to the plastid. The protein resides in the chloroplast stroma. The catalysed reaction is Hydrolysis of proteins to small peptides in the presence of ATP and magnesium. alpha-casein is the usual test substrate. In the absence of ATP, only oligopeptides shorter than five residues are hydrolyzed (such as succinyl-Leu-Tyr-|-NHMec, and Leu-Tyr-Leu-|-Tyr-Trp, in which cleavage of the -Tyr-|-Leu- and -Tyr-|-Trp bonds also occurs).. In terms of biological role, cleaves peptides in various proteins in a process that requires ATP hydrolysis. Has a chymotrypsin-like activity. Plays a major role in the degradation of misfolded proteins. This Helianthus annuus (Common sunflower) protein is ATP-dependent Clp protease proteolytic subunit.